Here is a 464-residue protein sequence, read N- to C-terminus: Glucose-6-phosphate isomerase (464 aa).

The active-site Proton donor is Glu290. Residues His319 and Lys433 contribute to the active site.

It belongs to the GPI family.

The protein resides in the cytoplasm. It catalyses the reaction alpha-D-glucose 6-phosphate = beta-D-fructose 6-phosphate. Its pathway is carbohydrate biosynthesis; gluconeogenesis. It functions in the pathway carbohydrate degradation; glycolysis; D-glyceraldehyde 3-phosphate and glycerone phosphate from D-glucose: step 2/4. Functionally, catalyzes the reversible isomerization of glucose-6-phosphate to fructose-6-phosphate. This chain is Glucose-6-phosphate isomerase, found in Carboxydothermus hydrogenoformans (strain ATCC BAA-161 / DSM 6008 / Z-2901).